A 105-amino-acid polypeptide reads, in one-letter code: MTTEKIDGVSVTARANVYFDGKCVSHGITFPDGTKKSVGVILPATLTFNTGAPEIMECVGGACEYKLDGTDAWVKSGEGDKFSVPGNSKFEIRVTEAYHYICHFG.

Belongs to the nucleoside phosphorylase PpnP family.

The catalysed reaction is a purine D-ribonucleoside + phosphate = a purine nucleobase + alpha-D-ribose 1-phosphate. It carries out the reaction adenosine + phosphate = alpha-D-ribose 1-phosphate + adenine. The enzyme catalyses cytidine + phosphate = cytosine + alpha-D-ribose 1-phosphate. It catalyses the reaction guanosine + phosphate = alpha-D-ribose 1-phosphate + guanine. The catalysed reaction is inosine + phosphate = alpha-D-ribose 1-phosphate + hypoxanthine. It carries out the reaction thymidine + phosphate = 2-deoxy-alpha-D-ribose 1-phosphate + thymine. The enzyme catalyses uridine + phosphate = alpha-D-ribose 1-phosphate + uracil. It catalyses the reaction xanthosine + phosphate = alpha-D-ribose 1-phosphate + xanthine. Functionally, catalyzes the phosphorolysis of diverse nucleosides, yielding D-ribose 1-phosphate and the respective free bases. Can use uridine, adenosine, guanosine, cytidine, thymidine, inosine and xanthosine as substrates. Also catalyzes the reverse reactions. This chain is Pyrimidine/purine nucleoside phosphorylase, found in Paracidovorax citrulli (strain AAC00-1) (Acidovorax citrulli).